Reading from the N-terminus, the 288-residue chain is 2-methoxy-6-polyprenyl-1,4-benzoquinol methylase, mitochondrial (288 aa).

Residues 1 to 27 constitute a mitochondrion transit peptide; it reads MALRSVSRRLGSRILNQRSFVASLHSH. S-adenosyl-L-methionine is bound by residues Thr94, Asp130, and 160–161; that span reads DA.

It belongs to the class I-like SAM-binding methyltransferase superfamily. MenG/UbiE family. Component of a multi-subunit COQ enzyme complex.

The protein resides in the mitochondrion inner membrane. The enzyme catalyses a 2-methoxy-6-(all-trans-polyprenyl)benzene-1,4-diol + S-adenosyl-L-methionine = a 5-methoxy-2-methyl-3-(all-trans-polyprenyl)benzene-1,4-diol + S-adenosyl-L-homocysteine + H(+). It functions in the pathway cofactor biosynthesis; ubiquinone biosynthesis. In terms of biological role, methyltransferase required for the conversion of 2-polyprenyl-6-methoxy-1,4-benzoquinol (DDMQH2) to 2-polyprenyl-3-methyl-6-methoxy-1,4-benzoquinol (DMQH2). The chain is 2-methoxy-6-polyprenyl-1,4-benzoquinol methylase, mitochondrial from Arabidopsis thaliana (Mouse-ear cress).